Consider the following 143-residue polypeptide: MSKATCSFEGCHSAVITINDDNIINLPEQVHSEFKLLENRTMRDATPSESNFLVVPDVWDFDNVGVSREIPSSILGDLSDKSDFVFEYGNSSWKIKKCLKYLICADCDKGPIGIICKVQDQTKNEERVLHLLSLRSLQIMGRN.

The region spanning 1 to 131 is the MSS4 domain; the sequence is MSKATCSFEG…TKNEERVLHL (131 aa). Positions 6, 11, 104, and 107 each coordinate Zn(2+).

It belongs to the DSS4/MSS4 family.

Functionally, guanine-nucleotide-releasing protein that acts on SEC4. Might play a general role in vesicular transport. This chain is Protein DSS4 (DSS4), found in Saccharomyces cerevisiae (strain ATCC 204508 / S288c) (Baker's yeast).